Reading from the N-terminus, the 387-residue chain is Formate-dependent phosphoribosylglycinamide formyltransferase (387 aa).

Residues 15-16 (EL) and Glu-75 each bind N(1)-(5-phospho-beta-D-ribosyl)glycinamide. ATP is bound by residues Arg-106, Lys-147, 152 to 157 (SSGKGQ), 187 to 190 (EEFI), and Glu-195. One can recognise an ATP-grasp domain in the interval 111–301 (DLASNELNIR…EFELHLRAVL (191 aa)). Glu-260 and Glu-272 together coordinate Mg(2+). Residues Asp-279, Lys-349, and 356-357 (RR) each bind N(1)-(5-phospho-beta-D-ribosyl)glycinamide.

This sequence belongs to the PurK/PurT family. Homodimer.

It catalyses the reaction N(1)-(5-phospho-beta-D-ribosyl)glycinamide + formate + ATP = N(2)-formyl-N(1)-(5-phospho-beta-D-ribosyl)glycinamide + ADP + phosphate + H(+). Its pathway is purine metabolism; IMP biosynthesis via de novo pathway; N(2)-formyl-N(1)-(5-phospho-D-ribosyl)glycinamide from N(1)-(5-phospho-D-ribosyl)glycinamide (formate route): step 1/1. Its function is as follows. Involved in the de novo purine biosynthesis. Catalyzes the transfer of formate to 5-phospho-ribosyl-glycinamide (GAR), producing 5-phospho-ribosyl-N-formylglycinamide (FGAR). Formate is provided by PurU via hydrolysis of 10-formyl-tetrahydrofolate. The protein is Formate-dependent phosphoribosylglycinamide formyltransferase of Prochlorococcus marinus (strain NATL2A).